The chain runs to 60 residues: Large ribosomal subunit protein uL30 (60 aa).

This sequence belongs to the universal ribosomal protein uL30 family. In terms of assembly, part of the 50S ribosomal subunit.

This chain is Large ribosomal subunit protein uL30, found in Kineococcus radiotolerans (strain ATCC BAA-149 / DSM 14245 / SRS30216).